A 366-amino-acid chain; its full sequence is Ferredoxin--NADP reductase (366 aa).

Positions 51, 59, 64, 104, 139, 308, and 349 each coordinate FAD.

The protein belongs to the ferredoxin--NADP reductase type 2 family. Homodimer. FAD serves as cofactor.

The enzyme catalyses 2 reduced [2Fe-2S]-[ferredoxin] + NADP(+) + H(+) = 2 oxidized [2Fe-2S]-[ferredoxin] + NADPH. This Methylibium petroleiphilum (strain ATCC BAA-1232 / LMG 22953 / PM1) protein is Ferredoxin--NADP reductase.